A 56-amino-acid polypeptide reads, in one-letter code: Large ribosomal subunit protein bL32 (56 aa).

Positions 1 to 35 are disordered; sequence MAVQQNKSTRSKRGMRRSHHALRSVTISVDRTSGE. Residues 9–22 show a composition bias toward basic residues; it reads TRSKRGMRRSHHAL.

It belongs to the bacterial ribosomal protein bL32 family.

The polypeptide is Large ribosomal subunit protein bL32 (Blochmanniella pennsylvanica (strain BPEN)).